The primary structure comprises 193 residues: Xanthine phosphoribosyltransferase (193 aa).

Leucine 20 and asparagine 27 together coordinate xanthine. 129 to 133 serves as a coordination point for 5-phospho-alpha-D-ribose 1-diphosphate; sequence ANGKA. Residue lysine 157 participates in xanthine binding.

It belongs to the purine/pyrimidine phosphoribosyltransferase family. Xpt subfamily. Homodimer.

Its subcellular location is the cytoplasm. It carries out the reaction XMP + diphosphate = xanthine + 5-phospho-alpha-D-ribose 1-diphosphate. Its pathway is purine metabolism; XMP biosynthesis via salvage pathway; XMP from xanthine: step 1/1. In terms of biological role, converts the preformed base xanthine, a product of nucleic acid breakdown, to xanthosine 5'-monophosphate (XMP), so it can be reused for RNA or DNA synthesis. In Bifidobacterium adolescentis (strain ATCC 15703 / DSM 20083 / NCTC 11814 / E194a), this protein is Xanthine phosphoribosyltransferase.